A 362-amino-acid chain; its full sequence is MGACGSVMQDEALKEQARIHRQIEKSLEKKKSALLEQSVLLIGPGESGKSTVLKQIRSVTVCRAMCGGYTKHELEEKKLLILRNLWTFSDMLLEYVIKNYLDMNETDKKKYKVMIEELKFCVMSGGHMGDELAETVKVFWLCAPIQEAYEKRNTYHLTESAGYFFENIDRIKMPDFQPTNQDIVRIRVPTTGVVTADVILKNIKLSVIDCGGQRQERRKWYHYFDDVHAVLFVAAISEYDQKLVEDESVNRMDEALNLYHIVFNGKYFTKAACILFLNKIDLFREKVKSVSIKKFHPGFEGANTAEDGAKYFRRKFRDGMHPDFKKRLYCHETCAISDQVQIIINTVIDTVVQENLKDTGMI.

Residue Gly-2 is the site of N-myristoyl glycine attachment. Cys-4 carries the S-palmitoyl cysteine lipid modification. Residues Leu-35 to Ile-362 form the G-alpha domain. Positions Ser-38–Thr-51 are G1 motif. Residues Gly-43–Ser-50, Val-184–Thr-190, Asp-209–Gln-213, Asn-278–Asp-281, and Ala-335 each bind GTP. Ser-50 and Thr-190 together coordinate Mg(2+). The tract at residues Asp-182 to Thr-190 is G2 motif. The G3 motif stretch occupies residues Leu-205–Arg-214. Residues Ile-274–Asp-281 are G4 motif. Residues Thr-333 to Ser-337 are G5 motif.

This sequence belongs to the G-alpha family. As to quaternary structure, g proteins are composed of 3 units; alpha, beta and gamma. The alpha chain contains the guanine nucleotide binding site.

Functionally, guanine nucleotide-binding proteins (G proteins) are involved as modulators or transducers in various transmembrane signaling systems. This chain is Guanine nucleotide-binding protein alpha-10 subunit (gpa-10), found in Caenorhabditis briggsae.